Reading from the N-terminus, the 325-residue chain is Taste receptor type 2 member 7 (325 aa).

Over 1–9 (MADKVQTTL) the chain is Extracellular. A helical transmembrane segment spans residues 10–30 (LFLAVGEFSVGILGNAFIGLV). Residues 31–55 (NCMDWVKKRKIASIDLILTSLAISR) lie on the Cytoplasmic side of the membrane. The helical transmembrane segment at 56–76 (ICLLCVILLDCFILVLYPDVY) threads the bilayer. Over 77–94 (ATGKEMRIIDFFWTLTNH) the chain is Extracellular. Residues 95-115 (LSIWFATCLSIYYFFRIANFF) form a helical membrane-spanning segment. The Cytoplasmic portion of the chain corresponds to 116–128 (HPLFLWMKWRIDR). The chain crosses the membrane as a helical span at residues 129-149 (VISWILLGCVVLSVFISLPAT). At 150–187 (ENLNADFRFCVKAKRKTNLTWSCRVNKTQHASTKLFLN) the chain is on the extracellular side. 2 N-linked (GlcNAc...) asparagine glycosylation sites follow: Asn-167 and Asn-175. The helical transmembrane segment at 188–208 (LATLLPFCVCLMSFFLLILSL) threads the bilayer. The Cytoplasmic segment spans residues 209–235 (RRHIRRMQLSATGCRDPSTEAHVRALK). The chain crosses the membrane as a helical span at residues 236-256 (AVISFLLLFIAYYLSFLVATS). At 257 to 266 (SYFMPETELA) the chain is on the extracellular side. Residues 267–287 (VIFGESIALIYPSSHSFILIL) traverse the membrane as a helical segment. Over 288–319 (GNNKLRHASLKVIWKVMSILKGRKFQQHKQIG) the chain is Cytoplasmic.

It belongs to the G-protein coupled receptor T2R family.

Its subcellular location is the membrane. In terms of biological role, gustducin-coupled receptor implicated in the perception of bitter compounds in the oral cavity and the gastrointestinal tract. Signals through PLCB2 and the calcium-regulated cation channel TRPM5. The sequence is that of Taste receptor type 2 member 7 (TAS2R7) from Pan paniscus (Pygmy chimpanzee).